A 195-amino-acid polypeptide reads, in one-letter code: Insertion element IS136 uncharacterized protein Atu4601 (195 aa).

The Integrase catalytic domain maps to Met25–Ser194.

In Agrobacterium fabrum (strain C58 / ATCC 33970) (Agrobacterium tumefaciens (strain C58)), this protein is Insertion element IS136 uncharacterized protein Atu4601.